The chain runs to 260 residues: Flap endonuclease Xni (260 aa).

Aspartate 105 is a binding site for Mg(2+). The region spanning 164–259 (NQFLDLMALA…VNGPANTQQA (96 aa)) is the 5'-3' exonuclease domain. The K(+) site is built by leucine 172, alanine 173, proline 181, isoleucine 183, and isoleucine 186. Residues 185-190 (GIGPKS) are interaction with DNA.

This sequence belongs to the Xni family. The cofactor is Mg(2+). It depends on K(+) as a cofactor.

Its function is as follows. Has flap endonuclease activity. During DNA replication, flap endonucleases cleave the 5'-overhanging flap structure that is generated by displacement synthesis when DNA polymerase encounters the 5'-end of a downstream Okazaki fragment. This is Flap endonuclease Xni from Shewanella sp. (strain MR-4).